A 118-amino-acid chain; its full sequence is Small ribosomal subunit protein uS13 (118 aa).

The tract at residues 91 to 118 (HRRGLPVRGQRTKTNARTRKGPRKPIKK) is disordered.

This sequence belongs to the universal ribosomal protein uS13 family. As to quaternary structure, part of the 30S ribosomal subunit. Forms a loose heterodimer with protein S19. Forms two bridges to the 50S subunit in the 70S ribosome.

Functionally, located at the top of the head of the 30S subunit, it contacts several helices of the 16S rRNA. In the 70S ribosome it contacts the 23S rRNA (bridge B1a) and protein L5 of the 50S subunit (bridge B1b), connecting the 2 subunits; these bridges are implicated in subunit movement. Contacts the tRNAs in the A and P-sites. This chain is Small ribosomal subunit protein uS13, found in Serratia proteamaculans (strain 568).